Here is a 311-residue protein sequence, read N- to C-terminus: Pyrimidine-specific ribonucleoside hydrolase RihA (311 aa).

His240 is a catalytic residue.

This sequence belongs to the IUNH family. RihA subfamily.

Hydrolyzes cytidine or uridine to ribose and cytosine or uracil, respectively. The polypeptide is Pyrimidine-specific ribonucleoside hydrolase RihA (Salmonella agona (strain SL483)).